A 459-amino-acid chain; its full sequence is tRNA modification GTPase MnmE (459 aa).

(6S)-5-formyl-5,6,7,8-tetrahydrofolate-binding residues include Arg23, Glu86, and Arg125. Residues 221 to 380 form the TrmE-type G domain; it reads GLKTVIVGKP…LQDKIESMVY (160 aa). Position 231 (Asn231) interacts with K(+). GTP-binding positions include 231-236, 250-256, and 275-278; these read NVGKSS, TDIPGTT, and DTAG. Residue Ser235 participates in Mg(2+) binding. Thr250, Ile252, and Thr255 together coordinate K(+). Thr256 is a binding site for Mg(2+). Residue Lys459 participates in (6S)-5-formyl-5,6,7,8-tetrahydrofolate binding.

This sequence belongs to the TRAFAC class TrmE-Era-EngA-EngB-Septin-like GTPase superfamily. TrmE GTPase family. Homodimer. Heterotetramer of two MnmE and two MnmG subunits. The cofactor is K(+).

The protein localises to the cytoplasm. Functionally, exhibits a very high intrinsic GTPase hydrolysis rate. Involved in the addition of a carboxymethylaminomethyl (cmnm) group at the wobble position (U34) of certain tRNAs, forming tRNA-cmnm(5)s(2)U34. The protein is tRNA modification GTPase MnmE of Clostridioides difficile (strain 630) (Peptoclostridium difficile).